A 256-amino-acid chain; its full sequence is Small ribosomal subunit protein eS1 (256 aa).

Ala-2 bears the N-acetylalanine; partial mark.

This sequence belongs to the eukaryotic ribosomal protein eS1 family. In terms of assembly, component of the small ribosomal subunit. Mature ribosomes consist of a small (40S) and a large (60S) subunit. The 40S subunit contains about 33 different proteins and 1 molecule of RNA (18S). The 60S subunit contains about 49 different proteins and 3 molecules of RNA (25S, 5.8S and 5S).

It localises to the cytoplasm. The protein is Small ribosomal subunit protein eS1 of Meyerozyma guilliermondii (strain ATCC 6260 / CBS 566 / DSM 6381 / JCM 1539 / NBRC 10279 / NRRL Y-324) (Yeast).